The following is a 100-amino-acid chain: Urease subunit gamma (100 aa).

This sequence belongs to the urease gamma subunit family. In terms of assembly, heterotrimer of UreA (gamma), UreB (beta) and UreC (alpha) subunits. Three heterotrimers associate to form the active enzyme.

The protein localises to the cytoplasm. It carries out the reaction urea + 2 H2O + H(+) = hydrogencarbonate + 2 NH4(+). The protein operates within nitrogen metabolism; urea degradation; CO(2) and NH(3) from urea (urease route): step 1/1. The chain is Urease subunit gamma from Sinorhizobium fredii (strain NBRC 101917 / NGR234).